Here is a 487-residue protein sequence, read N- to C-terminus: Probable Xaa-Pro aminopeptidase CPSG_02684 (487 aa).

The span at 1–10 shows a compositional bias: polar residues; that stretch reads MAGSNTLSSS. Residues 1–22 form a disordered region; it reads MAGSNTLSSSEHGDDPRGHSYS. Mn(2+) is bound by residues D275, D286, E421, and E460.

It belongs to the peptidase M24B family. Requires Mn(2+) as cofactor.

The catalysed reaction is Release of any N-terminal amino acid, including proline, that is linked to proline, even from a dipeptide or tripeptide.. In terms of biological role, catalyzes the removal of a penultimate prolyl residue from the N-termini of peptides. This Coccidioides posadasii (strain RMSCC 757 / Silveira) (Valley fever fungus) protein is Probable Xaa-Pro aminopeptidase CPSG_02684.